A 487-amino-acid chain; its full sequence is Protein nucleotidyltransferase YdiU (487 aa).

Positions 90, 92, 93, 113, 125, 126, 176, and 183 each coordinate ATP. Aspartate 252 acts as the Proton acceptor in catalysis. Mg(2+) is bound by residues asparagine 253 and aspartate 262. Aspartate 262 lines the ATP pocket.

This sequence belongs to the SELO family. Mg(2+) serves as cofactor. Mn(2+) is required as a cofactor.

It carries out the reaction L-seryl-[protein] + ATP = 3-O-(5'-adenylyl)-L-seryl-[protein] + diphosphate. The enzyme catalyses L-threonyl-[protein] + ATP = 3-O-(5'-adenylyl)-L-threonyl-[protein] + diphosphate. It catalyses the reaction L-tyrosyl-[protein] + ATP = O-(5'-adenylyl)-L-tyrosyl-[protein] + diphosphate. The catalysed reaction is L-histidyl-[protein] + UTP = N(tele)-(5'-uridylyl)-L-histidyl-[protein] + diphosphate. It carries out the reaction L-seryl-[protein] + UTP = O-(5'-uridylyl)-L-seryl-[protein] + diphosphate. The enzyme catalyses L-tyrosyl-[protein] + UTP = O-(5'-uridylyl)-L-tyrosyl-[protein] + diphosphate. Its function is as follows. Nucleotidyltransferase involved in the post-translational modification of proteins. It can catalyze the addition of adenosine monophosphate (AMP) or uridine monophosphate (UMP) to a protein, resulting in modifications known as AMPylation and UMPylation. The chain is Protein nucleotidyltransferase YdiU from Pseudomonas syringae pv. tomato (strain ATCC BAA-871 / DC3000).